The sequence spans 608 residues: Extracellular metalloproteinase 5 (608 aa).

An N-terminal signal peptide occupies residues 1–20 (MHGLLLAAAGLLSLPLHVIA). Positions 21–244 (HPQPSTNLAG…VHNVVDYVSH (224 aa)) are excised as a propeptide. An N-linked (GlcNAc...) asparagine glycan is attached at asparagine 285. Histidine 427 contributes to the Zn(2+) binding site. Glutamate 428 is a catalytic residue. Histidine 431 is a Zn(2+) binding site. Asparagine 591 carries an N-linked (GlcNAc...) asparagine glycan.

It belongs to the peptidase M36 family. Zn(2+) serves as cofactor.

Its subcellular location is the secreted. Functionally, secreted metalloproteinase probably acting as a virulence factor. In Trichophyton tonsurans (Scalp ringworm fungus), this protein is Extracellular metalloproteinase 5 (MEP5).